The sequence spans 338 residues: Ketol-acid reductoisomerase (NADP(+)) (338 aa).

In terms of domain architecture, KARI N-terminal Rossmann spans 1 to 181; the sequence is MRVFYDKDCD…GGGRTGIIET (181 aa). NADP(+) contacts are provided by residues 24–27, arginine 47, serine 50, threonine 52, and 82–85; these read YGSQ and DEFQ. The active site involves histidine 107. An NADP(+)-binding site is contributed by glycine 133. Positions 182-327 constitute a KARI C-terminal knotted domain; it reads TFKDETETDL…EKLRAMMPWI (146 aa). 4 residues coordinate Mg(2+): aspartate 190, glutamate 194, glutamate 226, and glutamate 230. Substrate is bound at residue serine 251.

It belongs to the ketol-acid reductoisomerase family. It depends on Mg(2+) as a cofactor.

The enzyme catalyses (2R)-2,3-dihydroxy-3-methylbutanoate + NADP(+) = (2S)-2-acetolactate + NADPH + H(+). The catalysed reaction is (2R,3R)-2,3-dihydroxy-3-methylpentanoate + NADP(+) = (S)-2-ethyl-2-hydroxy-3-oxobutanoate + NADPH + H(+). It functions in the pathway amino-acid biosynthesis; L-isoleucine biosynthesis; L-isoleucine from 2-oxobutanoate: step 2/4. The protein operates within amino-acid biosynthesis; L-valine biosynthesis; L-valine from pyruvate: step 2/4. Involved in the biosynthesis of branched-chain amino acids (BCAA). Catalyzes an alkyl-migration followed by a ketol-acid reduction of (S)-2-acetolactate (S2AL) to yield (R)-2,3-dihydroxy-isovalerate. In the isomerase reaction, S2AL is rearranged via a Mg-dependent methyl migration to produce 3-hydroxy-3-methyl-2-ketobutyrate (HMKB). In the reductase reaction, this 2-ketoacid undergoes a metal-dependent reduction by NADPH to yield (R)-2,3-dihydroxy-isovalerate. The polypeptide is Ketol-acid reductoisomerase (NADP(+)) (Pseudomonas aeruginosa (strain LESB58)).